Reading from the N-terminus, the 293-residue chain is MRNICVIGSCSMDLVVTSDKRPKAGETVLGTSFQTVPGGKGANQAVAAARLGAQVFMVGKVGDDHYGTAILNNLKANGVRTDYMEPVTHTESGTAHIVLAEGDNSIVVVKGANDDITPAYALNALEQIEKVDMVLIQQEIPEETVDEVCKYCHSHDIPIILNPAPARPLKQETIDHATYLTPNEHEASILFPELTISEALALYPAKLFITEGKQGVRYSAGSKEVLIPSFPVEPVDTTGAGDTFNAAFAVALAEGKDIEAALRFANRAASLSVCSFGAQGGMPTRNEVEELLS.

Substrate is bound by residues 11-13 (SMD), 39-43 (GKGAN), and Glu139. ATP-binding positions include Asn183 and 210–215 (TEGKQG). Residues Asp236 and Thr238 each coordinate K(+). ATP-binding positions include 241–242 (GD) and Asn266. Position 242 (Asp242) interacts with substrate. Asp242 functions as the Proton acceptor in the catalytic mechanism. Ser272, Ser275, and Gly277 together coordinate K(+).

Belongs to the carbohydrate kinase PfkB family. Ribokinase subfamily. Homodimer. Mg(2+) serves as cofactor.

Its subcellular location is the cytoplasm. The catalysed reaction is D-ribose + ATP = D-ribose 5-phosphate + ADP + H(+). The protein operates within carbohydrate metabolism; D-ribose degradation; D-ribose 5-phosphate from beta-D-ribopyranose: step 2/2. With respect to regulation, activated by a monovalent cation that binds near, but not in, the active site. The most likely occupant of the site in vivo is potassium. Ion binding induces a conformational change that may alter substrate affinity. Catalyzes the phosphorylation of ribose at O-5 in a reaction requiring ATP and magnesium. The resulting D-ribose-5-phosphate can then be used either for sythesis of nucleotides, histidine, and tryptophan, or as a component of the pentose phosphate pathway. The polypeptide is Ribokinase (Bacillus subtilis (strain 168)).